The chain runs to 345 residues: MLNLIKLPQVFTINQVPKVFHEDGIISGYRHPCSSAKDCVLSLFQLTNETLNIWTHFLPTWFFLWKLLTVVLVLEDWRDPFIWPFLVFLLSCCVYPLASSCAHTFSTMSERARHICFFFDYGALSFYSLGSAIIYSSYSFPDKWVNGTFHLNYVSIAVVNSIISTALACYSRLGLPFLEYNCHSIKRPSGKLDQKLCKCLRIIAFVYPYLFDNIPLFYRIFVCAGEGCTVNEANTVHYQHTSLAFFTGFLFATHLPERLAPGSFDYIGHSHQLFHVFAIIGTYFQMTAIELDMAARKQWLHAHLPPVTFLNTVGAAFFSVVSGLCIVYVFSLSLFSTRGVKNKSF.

Over 1-52 (MLNLIKLPQVFTINQVPKVFHEDGIISGYRHPCSSAKDCVLSLFQLTNETLN) the chain is Cytoplasmic. Residues 53 to 73 (IWTHFLPTWFFLWKLLTVVLV) form a helical membrane-spanning segment. Topologically, residues 74 to 80 (LEDWRDP) are extracellular. A helical transmembrane segment spans residues 81 to 101 (FIWPFLVFLLSCCVYPLASSC). Over 102–114 (AHTFSTMSERARH) the chain is Cytoplasmic. The helical transmembrane segment at 115–135 (ICFFFDYGALSFYSLGSAIIY) threads the bilayer. Topologically, residues 136–148 (SSYSFPDKWVNGT) are extracellular. The chain crosses the membrane as a helical span at residues 149-169 (FHLNYVSIAVVNSIISTALAC). Topologically, residues 170-201 (YSRLGLPFLEYNCHSIKRPSGKLDQKLCKCLR) are cytoplasmic. A helical membrane pass occupies residues 202 to 222 (IIAFVYPYLFDNIPLFYRIFV). Topologically, residues 223–272 (CAGEGCTVNEANTVHYQHTSLAFFTGFLFATHLPERLAPGSFDYIGHSHQ) are extracellular. A helical membrane pass occupies residues 273-293 (LFHVFAIIGTYFQMTAIELDM). The Cytoplasmic portion of the chain corresponds to 294–314 (AARKQWLHAHLPPVTFLNTVG). The helical transmembrane segment at 315 to 335 (AAFFSVVSGLCIVYVFSLSLF) threads the bilayer. At 336–345 (STRGVKNKSF) the chain is on the extracellular side.

It belongs to the ADIPOR family.

The protein resides in the membrane. Functionally, steroid membrane receptor. Binds progesterone. May be involved in oocyte maturation. The polypeptide is Membrane progestin receptor gamma-A (paqr5a) (Danio rerio (Zebrafish)).